The chain runs to 447 residues: Sulfoquinovose isomerase (447 aa).

The protein belongs to the SqvD family.

It catalyses the reaction 6-sulfo-beta-D-quinovose = 6-deoxy-6-sulfo-D-fructose. In terms of biological role, part of the sulfo-TK pathway, a D-sulfoquinovose degradation pathway that produces 2-hydroxyethane-1-sulfonate (isethionate). Catalyzes the isomerization of sulfoquinovose (SQ) to 6-deoxy-6-sulfo-D-fructose (SF). The protein is Sulfoquinovose isomerase of Clostridium sp. (strain MSTE9).